Reading from the N-terminus, the 83-residue chain is Small ribosomal subunit protein uS17 (83 aa).

It belongs to the universal ribosomal protein uS17 family. Part of the 30S ribosomal subunit.

One of the primary rRNA binding proteins, it binds specifically to the 5'-end of 16S ribosomal RNA. In Colwellia psychrerythraea (strain 34H / ATCC BAA-681) (Vibrio psychroerythus), this protein is Small ribosomal subunit protein uS17.